Here is a 416-residue protein sequence, read N- to C-terminus: Serine hydroxymethyltransferase (416 aa).

Residues L118 and 122 to 124 (GHL) each bind (6S)-5,6,7,8-tetrahydrofolate. Position 226 is an N6-(pyridoxal phosphate)lysine (K226). Residues E242 and 350 to 352 (SPF) each bind (6S)-5,6,7,8-tetrahydrofolate.

This sequence belongs to the SHMT family. As to quaternary structure, homodimer. Pyridoxal 5'-phosphate serves as cofactor.

Its subcellular location is the cytoplasm. It catalyses the reaction (6R)-5,10-methylene-5,6,7,8-tetrahydrofolate + glycine + H2O = (6S)-5,6,7,8-tetrahydrofolate + L-serine. The protein operates within one-carbon metabolism; tetrahydrofolate interconversion. It functions in the pathway amino-acid biosynthesis; glycine biosynthesis; glycine from L-serine: step 1/1. In terms of biological role, catalyzes the reversible interconversion of serine and glycine with tetrahydrofolate (THF) serving as the one-carbon carrier. This reaction serves as the major source of one-carbon groups required for the biosynthesis of purines, thymidylate, methionine, and other important biomolecules. Also exhibits THF-independent aldolase activity toward beta-hydroxyamino acids, producing glycine and aldehydes, via a retro-aldol mechanism. This Helicobacter hepaticus (strain ATCC 51449 / 3B1) protein is Serine hydroxymethyltransferase.